The sequence spans 1091 residues: Sodium/potassium exporting P-type ATPase 1 (1091 aa).

The Cytoplasmic segment spans residues 1–63 (MGEGTTKENN…LGDDTKIDYK (63 aa)). The chain crosses the membrane as a helical span at residues 64-84 (AMVLHQVCNAMIMVLLISMII). The Extracellular portion of the chain corresponds to 85–90 (SFAMHD). A helical membrane pass occupies residues 91-111 (WITGGVISFVIAVNVLIGLVQ). Over 112–282 (EYKATKTMNS…TNVGTPLHRK (171 aa)) the chain is Cytoplasmic. Residues 283-303 (LSKLAVLLFWIAVLFAIIVMA) traverse the membrane as a helical segment. At 304–312 (SQKFDVDKR) the chain is on the extracellular side. The helical transmembrane segment at 313–333 (VAIYAICVALSMIPSSLVVVL) threads the bilayer. Topologically, residues 334–815 (TITMSVGAAV…RRMTDNIQKF (482 aa)) are cytoplasmic. The active-site 4-aspartylphosphate intermediate is the Asp-369. 2 residues coordinate Mg(2+): Asp-369 and Thr-371. ATP contacts are provided by Thr-371 and Glu-483. The tract at residues 499 to 525 (ALTGEKSTNQSNENDQSSLSQHNEKPG) is disordered. Residues 503 to 519 (EKSTNQSNENDQSSLSQ) are compositionally biased toward polar residues. ATP-binding residues include Lys-561, Arg-606, Thr-673, Gly-674, Asp-675, Arg-732, and Lys-738. Mg(2+) is bound at residue Asp-757. Residue Asn-760 coordinates ATP. Residues 816–836 (VLQLLAENVAQALYLIIGLVF) form a helical membrane-spanning segment. Residues 837 to 848 (RDENGKSVFPLS) are Extracellular-facing. A helical transmembrane segment spans residues 849 to 869 (PVEVLWIIVVTSCFPAMGLGL). The Cytoplasmic segment spans residues 870–885 (EKAAPDLMDRPPHDSE). The helical transmembrane segment at 886-906 (VGIFTWEVIIDTFAYGIIMTG) threads the bilayer. At 907-943 (SCMASFTGSLYGINSGRLGHDCDGTYNSSCRDVYRSR) the chain is on the extracellular side. A helical membrane pass occupies residues 944-964 (SAAFATMTWCALILAWEVVDM). The Cytoplasmic segment spans residues 965 to 991 (RRSFFRMHPDTDSPVKEFFRSIWGNQF). Residues 992-1012 (LFWSIIFGFVSAFPVVYIPVI) form a helical membrane-spanning segment. At 1013-1021 (NDKVFLHKP) the chain is on the extracellular side. Residues 1022–1042 (IGAEWGLAIAFTIAFWIGAEL) form a helical membrane-spanning segment. At 1043–1091 (YKCGKRRYFKTQRAHNPENDLESNNKRDPFEAYSTSTTIHTEVNIGIKQ) the chain is on the cytoplasmic side.

The protein belongs to the cation transport ATPase (P-type) (TC 3.A.3) family. Type IID subfamily. Mg(2+) is required as a cofactor. Post-translationally, the active site is phosphorylated in presence of sodium or potassium and in conditions of higher pH. Not phosphorylated in presence of calcium ions.

It is found in the cell membrane. The enzyme catalyses Na(+)(in) + ATP + H2O = Na(+)(out) + ADP + phosphate + H(+). The catalysed reaction is K(+)(in) + ATP + H2O = K(+)(out) + ADP + phosphate + H(+). Its function is as follows. Catalyzes the hydrolysis of ATP coupled with the export of sodium and potassium from the cell. May export potassium less efficiently. May transport other cations such as lithium. Sodium/potassium efflux ATPases are involved in salt tolerance and maintaining the membrane potential across the plasma membrane in high salinity (Na+) or alkaline (K+) environments. Is negatively modulated by SIS2/HAL3. In Saccharomyces cerevisiae (strain ATCC 204508 / S288c) (Baker's yeast), this protein is Sodium/potassium exporting P-type ATPase 1.